The sequence spans 694 residues: Elongation factor G (694 aa).

Residues 8–287 (EDYRNFGIMA…AVVEFLPAPT (280 aa)) enclose the tr-type G domain. Residues 17–24 (AHIDAGKT), 86–90 (DTPGH), and 140–143 (NKMD) each bind GTP.

Belongs to the TRAFAC class translation factor GTPase superfamily. Classic translation factor GTPase family. EF-G/EF-2 subfamily.

The protein resides in the cytoplasm. Functionally, catalyzes the GTP-dependent ribosomal translocation step during translation elongation. During this step, the ribosome changes from the pre-translocational (PRE) to the post-translocational (POST) state as the newly formed A-site-bound peptidyl-tRNA and P-site-bound deacylated tRNA move to the P and E sites, respectively. Catalyzes the coordinated movement of the two tRNA molecules, the mRNA and conformational changes in the ribosome. This is Elongation factor G from Brucella suis (strain ATCC 23445 / NCTC 10510).